Reading from the N-terminus, the 264-residue chain is uncharacterized protein (264 aa).

The helical transmembrane segment at 7–27 (LTLGICLVLLIILIVGYVIMT) threads the bilayer.

Belongs to the staphylococcal tandem lipoprotein family.

It is found in the cell membrane. This is an uncharacterized protein from Staphylococcus aureus (strain N315).